The following is a 706-amino-acid chain: Acyl-coenzyme A oxidase (706 aa).

Positions Met682–Lys706 are disordered. The span at Pro686–Glu699 shows a compositional bias: basic and acidic residues.

This sequence belongs to the acyl-CoA oxidase family. FAD is required as a cofactor.

It localises to the peroxisome. The catalysed reaction is a 2,3-saturated acyl-CoA + O2 = a (2E)-enoyl-CoA + H2O2. Its pathway is lipid metabolism; peroxisomal fatty acid beta-oxidation. The sequence is that of Acyl-coenzyme A oxidase (POX1) from Debaryomyces hansenii (strain ATCC 36239 / CBS 767 / BCRC 21394 / JCM 1990 / NBRC 0083 / IGC 2968) (Yeast).